Here is an 858-residue protein sequence, read N- to C-terminus: Receptor-like protein kinase ANXUR2 (858 aa).

Positions 1–27 (MNEKLRILFSFLCFFYVLLVSPSQSNG) are cleaved as a signal peptide. Residues 28-431 (QDISLSCGAS…VKKDFQGDKR (404 aa)) lie on the Extracellular side of the membrane. 4 N-linked (GlcNAc...) asparagine glycosylation sites follow: Asn-133, Asn-293, Asn-303, and Asn-331. The chain crosses the membrane as a helical span at residues 432–452 (ITAFVIGSAGGVAAVLFCALC). Residues 453 to 858 (FTMYQRKRKF…FSQIVNPKGR (406 aa)) lie on the Cytoplasmic side of the membrane. The Protein kinase domain maps to 521–794 (FDESNVIGVG…GDVLWNLEFA (274 aa)). ATP is bound by residues 527-535 (IGVGGFGKV) and Lys-549. Catalysis depends on Asp-645, which acts as the Proton acceptor. The tract at residues 800 to 858 (TADGSRHRTPSNGGGSVDLGGGGGGVTVNISAGESDLGDDLSSEENSGIFSQIVNPKGR) is disordered. Residues 811–825 (NGGGSVDLGGGGGGV) are compositionally biased toward gly residues. Residues 843-858 (EENSGIFSQIVNPKGR) are compositionally biased toward polar residues.

This sequence belongs to the protein kinase superfamily. Ser/Thr protein kinase family. Expressed in pollen, but not in pistils or seedlings.

The protein resides in the cell membrane. It catalyses the reaction L-seryl-[protein] + ATP = O-phospho-L-seryl-[protein] + ADP + H(+). It carries out the reaction L-threonyl-[protein] + ATP = O-phospho-L-threonyl-[protein] + ADP + H(+). Its function is as follows. Receptor-like protein kinase that controls pollen tube behavior by directing rupture at proper timing to release the sperm cell. This chain is Receptor-like protein kinase ANXUR2 (ANX2), found in Arabidopsis thaliana (Mouse-ear cress).